A 392-amino-acid polypeptide reads, in one-letter code: p21-activated protein kinase-interacting protein 1 (392 aa).

WD repeat units lie at residues Ala-40 to Ala-77, His-80 to Ser-118, Ala-121 to Ile-160, Thr-202 to Glu-240, and Ala-243 to Pro-284. The tract at residues Thr-309–Gln-392 is disordered. Basic and acidic residues predominate over residues Glu-325–Lys-351. Over residues Thr-355–Val-368 the composition is skewed to polar residues. Residues Lys-381 to Gln-392 show a composition bias toward basic residues.

Interacts with PAK1.

It localises to the nucleus. The protein resides in the nucleolus. In terms of biological role, negatively regulates the PAK1 kinase. PAK1 is a member of the PAK kinase family, which has been shown to play a positive role in the regulation of signaling pathways involving MAPK8 and RELA. PAK1 exists as an inactive homodimer, which is activated by binding of small GTPases such as CDC42 to an N-terminal regulatory domain. PAK1IP1 also binds to the N-terminus of PAK1, and inhibits the specific activation of PAK1 by CDC42. May be involved in ribosomal large subunit assembly. This chain is p21-activated protein kinase-interacting protein 1 (PAK1IP1), found in Bos taurus (Bovine).